Consider the following 455-residue polypeptide: Differentiation-associated protein 1 (455 aa).

The first 21 residues, 1 to 21 (MKFKLFLLVFFVFLLPYLSQS), serve as a signal peptide directing secretion. A disordered region spans residues 349–434 (IGSSSSSSSS…SDDDLGNPSS (86 aa)). The span at 351-423 (SSSSSSSSSS…KSNHTSSESS (73 aa)) shows a compositional bias: low complexity. Ser433 carries GPI-like-anchor amidated serine lipidation. Residues 434 to 455 (SSSILSVSKLIILLISIILYCF) constitute a propeptide, removed in mature form.

The protein localises to the cell membrane. Plays a role in differentiation. In Dictyostelium discoideum (Social amoeba), this protein is Differentiation-associated protein 1 (dia1).